The sequence spans 1560 residues: Tenascin-N (1560 aa).

An N-terminal signal peptide occupies residues 1–26; sequence MGLWGMLAFPLGFLLASVLLVASAPA. 3 EGF-like domains span residues 167–198, 199–229, and 230–260; these read DQPT…VDCA, YAAC…EDCS, and EQRC…PDCS. 9 disulfide bridges follow: Cys171-Cys181, Cys175-Cys186, Cys188-Cys197, Cys202-Cys212, Cys206-Cys217, Cys219-Cys228, Cys233-Cys243, Cys237-Cys248, and Cys250-Cys259. 12 consecutive Fibronectin type-III domains span residues 264–353, 354–444, 445–532, 533–622, 623–706, 709–798, 799–882, 885–970, 973–1062, 1063–1144, 1149–1238, and 1239–1325; these read APQG…DLAV, VGTA…TEID, GPTN…TEID, SPEN…IDSP, KNLV…APTD, GPKN…IDSP, GPKN…APTD, SPKN…IDSP, KNLV…TKAP, SPKN…IDPP, and RNLR…VDAR. Disordered regions lie at residues 868–888 and 1044–1063; these read GTQE…GPKN and GARE…DSPK. Residues 1044-1061 show a composition bias toward basic and acidic residues; the sequence is GARESKKANTEGHTDIDS. The 218-residue stretch at 1323-1540 folds into the Fibrinogen C-terminal domain; the sequence is DARFPHPSDC…YVELKIRPFG (218 aa). N-linked (GlcNAc...) asparagine glycosylation is present at Asn1411.

Belongs to the tenascin family. Homohexamer. Highest expression in kidney followed by spleen and brain. In brain, highest expression is found in hippocampus, cerebellum and olfactory bulb. Expressed in aortic valve, corneal limbus. Expressed in ribs periosteum. During a fracture repair process, expression increases in cells of newly formed perichondrium/peristeum surrounding the cartalaginous callus.

It localises to the secreted. It is found in the extracellular space. The protein resides in the extracellular matrix. Extracellular matrix protein that seems to be a ligand for ITGA8:ITGB1, ITGAV:ITGB1 and ITGA4:ITGB1. Involved in neurite outgrowth and cell migration in hippocampal explants. During endochondral bone formation, inhibits proliferation and differentiation of proteoblasts mediated by canonical WNT signaling. In tumors, stimulates angiogenesis by elongation, migration and sprouting of endothelial cells. Expressed in most mammary tumors, may facilitate tumorigenesis by supporting the migratory behavior of breast cancer cells. In Mus musculus (Mouse), this protein is Tenascin-N.